Reading from the N-terminus, the 541-residue chain is Arginine--tRNA ligase (541 aa).

The short motif at 119–129 (ANPTGPLHIGH) is the 'HIGH' region element.

This sequence belongs to the class-I aminoacyl-tRNA synthetase family. Monomer.

It localises to the cytoplasm. It catalyses the reaction tRNA(Arg) + L-arginine + ATP = L-arginyl-tRNA(Arg) + AMP + diphosphate. The polypeptide is Arginine--tRNA ligase (Helicobacter pylori (strain P12)).